We begin with the raw amino-acid sequence, 309 residues long: Succinate dehydrogenase [ubiquinone] iron-sulfur subunit 3, mitochondrial (309 aa).

A mitochondrion-targeting transit peptide spans 1-22; that stretch reads MSSVLRLLGRRICNPAAEKVRL. In terms of domain architecture, 2Fe-2S ferredoxin-type spans 69–160; sequence FKIYRWNPDK…PTIITPLPHM (92 aa). The [2Fe-2S] cluster site is built by Cys-120, Cys-125, and Cys-140. The region spanning 202–232 is the 4Fe-4S ferredoxin-type domain; the sequence is DRKKLDGLYECILCACCTTSCPSYWWNPEEF. [4Fe-4S] cluster contacts are provided by Cys-212, Cys-215, and Cys-218. Cys-222 is a [3Fe-4S] cluster binding site. Trp-227 is an a ubiquinone binding site. Residues Cys-270 and Cys-276 each coordinate [3Fe-4S] cluster. A [4Fe-4S] cluster-binding site is contributed by Cys-280.

This sequence belongs to the succinate dehydrogenase/fumarate reductase iron-sulfur protein family. In terms of assembly, component of complex II composed of eight subunits in plants: four classical SDH subunits SDH1, SDH2, SDH3 and SDH4 (a flavoprotein (FP), an iron-sulfur protein (IP), and a cytochrome b composed of a large and a small subunit.), as well as four subunits unknown in mitochondria from bacteria and heterotrophic eukaryotes. [2Fe-2S] cluster serves as cofactor. Requires [3Fe-4S] cluster as cofactor. [4Fe-4S] cluster is required as a cofactor.

It localises to the mitochondrion inner membrane. It catalyses the reaction a quinone + succinate = fumarate + a quinol. It participates in carbohydrate metabolism; tricarboxylic acid cycle; fumarate from succinate (eukaryal route): step 1/1. Its function is as follows. Iron-sulfur protein (IP) subunit of succinate dehydrogenase (SDH) that is involved in complex II of the mitochondrial electron transport chain and is responsible for transferring electrons from succinate to ubiquinone (coenzyme Q). The sequence is that of Succinate dehydrogenase [ubiquinone] iron-sulfur subunit 3, mitochondrial (SDH2-3) from Arabidopsis thaliana (Mouse-ear cress).